We begin with the raw amino-acid sequence, 446 residues long: Probable glycine dehydrogenase (decarboxylating) subunit 1 (446 aa).

The protein belongs to the GcvP family. N-terminal subunit subfamily. As to quaternary structure, the glycine cleavage system is composed of four proteins: P, T, L and H. In this organism, the P 'protein' is a heterodimer of two subunits.

The catalysed reaction is N(6)-[(R)-lipoyl]-L-lysyl-[glycine-cleavage complex H protein] + glycine + H(+) = N(6)-[(R)-S(8)-aminomethyldihydrolipoyl]-L-lysyl-[glycine-cleavage complex H protein] + CO2. Its function is as follows. The glycine cleavage system catalyzes the degradation of glycine. The P protein binds the alpha-amino group of glycine through its pyridoxal phosphate cofactor; CO(2) is released and the remaining methylamine moiety is then transferred to the lipoamide cofactor of the H protein. This is Probable glycine dehydrogenase (decarboxylating) subunit 1 from Desulforamulus reducens (strain ATCC BAA-1160 / DSM 100696 / MI-1) (Desulfotomaculum reducens).